A 273-amino-acid polypeptide reads, in one-letter code: Protein PERCC1 (273 aa).

Disordered regions lie at residues 18-84 (SHES…PETP) and 253-273 (GGSELQSGGTQGLEGTQLAEV). Residues 28–56 (EAPEISEEEEEEEEEEEEEEEEEEVDQDQ) are compositionally biased toward acidic residues. Positions 67–83 (DSQSSGVVPQDPSSPET) are enriched in polar residues.

Specifically expressed in the stomach, pancreas and intestine. In gastrointestinal tissue, expression is primarily restricted to gastric G cells and duodenal enteroendocrine cells (EECs).

Its function is as follows. Plays a critical role in intestinal function by promoting the development of enteroendocrine cells (EECs) of the gastrointestinal tract and pancreas. It is thereby required for normal enteroendocrine peptide hormone secretion. The chain is Protein PERCC1 from Mus musculus (Mouse).